A 157-amino-acid chain; its full sequence is Transcriptional repressor NrdR (157 aa).

Residues 3 to 34 fold into a zinc finger; the sequence is CPFCRHPDSRVVDSRTSDDGLSIRRRRQCPEC. In terms of domain architecture, ATP-cone spans 46 to 136; that stretch reads LSVIKRNGVV…VYQGFDSLDD (91 aa).

Belongs to the NrdR family. Zn(2+) serves as cofactor.

In terms of biological role, negatively regulates transcription of bacterial ribonucleotide reductase nrd genes and operons by binding to NrdR-boxes. This Clavibacter sepedonicus (Clavibacter michiganensis subsp. sepedonicus) protein is Transcriptional repressor NrdR.